A 417-amino-acid chain; its full sequence is Gamma-glutamyl phosphate reductase (417 aa).

The protein belongs to the gamma-glutamyl phosphate reductase family.

Its subcellular location is the cytoplasm. It catalyses the reaction L-glutamate 5-semialdehyde + phosphate + NADP(+) = L-glutamyl 5-phosphate + NADPH + H(+). It functions in the pathway amino-acid biosynthesis; L-proline biosynthesis; L-glutamate 5-semialdehyde from L-glutamate: step 2/2. Catalyzes the NADPH-dependent reduction of L-glutamate 5-phosphate into L-glutamate 5-semialdehyde and phosphate. The product spontaneously undergoes cyclization to form 1-pyrroline-5-carboxylate. This Escherichia coli O17:K52:H18 (strain UMN026 / ExPEC) protein is Gamma-glutamyl phosphate reductase.